A 269-amino-acid polypeptide reads, in one-letter code: 4-hydroxy-tetrahydrodipicolinate reductase (269 aa).

NAD(+)-binding positions include 13-18 and Asp39; that span reads GASGRM. Arg40 lines the NADP(+) pocket. NAD(+) is bound by residues 101–103 and 125–128; these read GTT and APNM. The active-site Proton donor/acceptor is His158. Residue His159 participates in (S)-2,3,4,5-tetrahydrodipicolinate binding. The active-site Proton donor is the Lys162. 168–169 serves as a coordination point for (S)-2,3,4,5-tetrahydrodipicolinate; that stretch reads GT.

This sequence belongs to the DapB family.

It is found in the cytoplasm. It catalyses the reaction (S)-2,3,4,5-tetrahydrodipicolinate + NAD(+) + H2O = (2S,4S)-4-hydroxy-2,3,4,5-tetrahydrodipicolinate + NADH + H(+). The enzyme catalyses (S)-2,3,4,5-tetrahydrodipicolinate + NADP(+) + H2O = (2S,4S)-4-hydroxy-2,3,4,5-tetrahydrodipicolinate + NADPH + H(+). The protein operates within amino-acid biosynthesis; L-lysine biosynthesis via DAP pathway; (S)-tetrahydrodipicolinate from L-aspartate: step 4/4. Functionally, catalyzes the conversion of 4-hydroxy-tetrahydrodipicolinate (HTPA) to tetrahydrodipicolinate. The chain is 4-hydroxy-tetrahydrodipicolinate reductase from Bordetella bronchiseptica (strain ATCC BAA-588 / NCTC 13252 / RB50) (Alcaligenes bronchisepticus).